Consider the following 290-residue polypeptide: Diaminopimelate epimerase (290 aa).

Substrate contacts are provided by asparagine 14 and asparagine 67. Residue cysteine 76 is the Proton donor of the active site. Substrate-binding positions include 77-78 (GN), asparagine 166, asparagine 199, and 217-218 (ER). Cysteine 226 acts as the Proton acceptor in catalysis. Substrate is bound at residue 227-228 (GT).

Belongs to the diaminopimelate epimerase family. In terms of assembly, homodimer.

It is found in the cytoplasm. The enzyme catalyses (2S,6S)-2,6-diaminopimelate = meso-2,6-diaminopimelate. It functions in the pathway amino-acid biosynthesis; L-lysine biosynthesis via DAP pathway; DL-2,6-diaminopimelate from LL-2,6-diaminopimelate: step 1/1. Its function is as follows. Catalyzes the stereoinversion of LL-2,6-diaminopimelate (L,L-DAP) to meso-diaminopimelate (meso-DAP), a precursor of L-lysine and an essential component of the bacterial peptidoglycan. The sequence is that of Diaminopimelate epimerase from Geobacillus thermodenitrificans (strain NG80-2).